The sequence spans 463 residues: Dipeptidyl peptidase 1 (463 aa).

The N-terminal stretch at 1–24 (MGPWSGSRLVALLLLVYGAGSVRG) is a signal peptide. Asparagine 29 and asparagine 53 each carry an N-linked (GlcNAc...) asparagine glycan. Intrachain disulfides connect cysteine 30/cysteine 118 and cysteine 54/cysteine 136. A propeptide spanning residues 135 to 230 (ACFTGRKTGN…TAEIQKKILH (96 aa)) is cleaved from the precursor. Asparagine 144 is a glycosylation site (N-linked (GlcNAc...) asparagine). Cystine bridges form between cysteine 255/cysteine 298, cysteine 291/cysteine 331, and cysteine 321/cysteine 337. Residue cysteine 258 is part of the active site. The N-linked (GlcNAc...) asparagine glycan is linked to asparagine 276. 2 residues coordinate chloride: phenylalanine 302 and tyrosine 304. Tyrosine 347 contacts chloride. Catalysis depends on residues histidine 405 and asparagine 427.

Belongs to the peptidase C1 family. As to quaternary structure, tetramer of heterotrimers consisting of exclusion domain, heavy- and light chains. It depends on chloride as a cofactor.

The protein localises to the lysosome. The enzyme catalyses Release of an N-terminal dipeptide, Xaa-Yaa-|-Zaa-, except when Xaa is Arg or Lys, or Yaa or Zaa is Pro.. In terms of biological role, thiol protease. Has dipeptidylpeptidase activity. Active against a broad range of dipeptide substrates composed of both polar and hydrophobic amino acids. Proline cannot occupy the P1 position and arginine cannot occupy the P2 position of the substrate. Can act as both an exopeptidase and endopeptidase. Activates serine proteases such as elastase, cathepsin G and granzymes A and B. The sequence is that of Dipeptidyl peptidase 1 (CTSC) from Bos taurus (Bovine).